The primary structure comprises 296 residues: Acetylglutamate kinase (296 aa).

Substrate is bound by residues 66–67, R88, and N191; that span reads GG.

The protein belongs to the acetylglutamate kinase family. ArgB subfamily.

It is found in the cytoplasm. The enzyme catalyses N-acetyl-L-glutamate + ATP = N-acetyl-L-glutamyl 5-phosphate + ADP. The protein operates within amino-acid biosynthesis; L-arginine biosynthesis; N(2)-acetyl-L-ornithine from L-glutamate: step 2/4. Catalyzes the ATP-dependent phosphorylation of N-acetyl-L-glutamate. This chain is Acetylglutamate kinase, found in Lawsonia intracellularis (strain PHE/MN1-00).